The chain runs to 188 residues: Methylated-DNA--protein-cysteine methyltransferase (188 aa).

DNA-binding residues include Tyr120, Gly121, and Arg134. Cys151 serves as the catalytic Nucleophile; methyl group acceptor. Position 157 (Ser157) interacts with DNA.

This sequence belongs to the MGMT family.

The protein resides in the nucleus. It catalyses the reaction a 6-O-methyl-2'-deoxyguanosine in DNA + L-cysteinyl-[protein] = S-methyl-L-cysteinyl-[protein] + a 2'-deoxyguanosine in DNA. The enzyme catalyses a 4-O-methyl-thymidine in DNA + L-cysteinyl-[protein] = a thymidine in DNA + S-methyl-L-cysteinyl-[protein]. Functionally, involved in the cellular defense against the biological effects of O6-methylguanine (O6-MeG) and O4-methylthymine (O4-MeT) in DNA. Repairs the methylated nucleobase in DNA by stoichiometrically transferring the methyl group to a cysteine residue in the enzyme. This is a suicide reaction: the enzyme is irreversibly inactivated. Prefers double-stranded DNA over single-stranded DNA as substrate. The polypeptide is Methylated-DNA--protein-cysteine methyltransferase (MGT1) (Saccharomyces cerevisiae (strain YJM789) (Baker's yeast)).